Reading from the N-terminus, the 346-residue chain is Oxidoreductase calI (346 aa).

The tract at residues V11–P33 is disordered. A compositionally biased stretch (basic and acidic residues) spans G18 to D32. NADP(+)-binding residues include L52, K76, D100, and N128. Catalysis depends on S181, which acts as the Proton donor. Y208, K212, and I241 together coordinate NADP(+). Y208 (proton acceptor) is an active-site residue. K212 functions as the Lowers pKa of active site Tyr in the catalytic mechanism.

Belongs to the short-chain dehydrogenases/reductases (SDR) family.

It participates in secondary metabolite biosynthesis. In terms of biological role, oxidoreductase; part of the gene cluster that mediates the biosynthesis of calbistrin A and related compounds. Calbistrin A is a secondary metabolite with an interesting structure that was recently found to have bioactivity against leukemia cells. It consists of two polyketides linked by an ester bond: a bicyclic decalin containing polyketide and a linear 12 carbon dioic acid structure. The polyketide synthase calA is probably responsible for forming the decalin moiety. Because calA lacks a designated enoylreductase (ER) domain, the required activity is provided by the trans-enoyl reductase calK. Following release from the PKS, calF then probably catalyzes the oxidation and the subsequent Diels Alder cycloisomerization that lead to the formation of the decalin moiety. The decalin polyketide backbone includes two C-methyl groups, at C7 and C11 in backbone, of which the C7 position is probably methylated by the methyltransferase domain of calA. A candidate for adding the methyl group at C11, if not done by CalA, is the cluster methyltransferase calH. Several additional tailoring enzymes within the cluster could be involved in the modification of the decalin polyketide product. Those include the 3 cytochrome P450 monooxygenases CalE, CalG and CalL, of which one might be responsible for the introduction of the extra hydroxyl group attached to the backbone of the decalin moiety, at position C9 in the backbone, that allows for attachment of the linear moiety. One tailoring enzyme activity that is expected to be involved in biosynthesis of calbistrin is an acyltransferase for connecting the two polyketide synthase products, and which could be performed by the cluster acyltransferase calJ. The enzyme responsible for the biosynthesis of the linear moiety, probably a second PKS, has not been identified yet. This Penicillium decumbens protein is Oxidoreductase calI.